The primary structure comprises 1093 residues: Probable cellulose synthase A catalytic subunit 3 [UDP-forming] (1093 aa).

Topologically, residues 1-280 are cytoplasmic; that stretch reads MEASAGLVAG…PSSQINPYRM (280 aa). Zn(2+) is bound by residues cysteine 39, cysteine 42, cysteine 58, cysteine 61, cysteine 66, cysteine 69, cysteine 81, and cysteine 84. An RING-type; degenerate zinc finger spans residues 39-85; it reads CQICGDDVGLNPDGEPFVACNECAFPVCRDCYEYERREGTQNCPQCK. Over residues 233 to 246 the composition is skewed to basic and acidic residues; it reads LHQMRNDGGGKDWD. The tract at residues 233-257 is disordered; sequence LHQMRNDGGGKDWDGDGDDGDLPLM. Residues 281-301 form a helical membrane-spanning segment; it reads VIIIRLVVLGFFFHYRVMHPV. Residues 302–303 lie on the Extracellular side of the membrane; the sequence is PD. The helical transmembrane segment at 304–324 threads the bilayer; sequence AFALWLISVICEIWFAMSWIL. Residues 325–869 are Cytoplasmic-facing; it reads DQFPKWFPIE…CLERFSYINS (545 aa). The UDP-alpha-D-glucose site is built by serine 363, lysine 369, glutamate 370, and aspartate 399. Residue aspartate 399 is part of the active site. Residues 453 to 480 are a coiled coil; that stretch reads VRERRAMKREYEEFKVRINALVAKAQKV. Lysine 540 is a binding site for UDP-alpha-D-glucose. 2 residues coordinate Mn(2+): lysine 541 and aspartate 565. Aspartate 793 is an active-site residue. A helical transmembrane segment spans residues 870 to 890; the sequence is IVYPFTSIPLLAYCTLPAICL. Residues 891-902 lie on the Extracellular side of the membrane; sequence LTGKFITPELTN. The helical transmembrane segment at 903 to 923 threads the bilayer; sequence VASLWFMSLFICIFATGILEM. The Cytoplasmic portion of the chain corresponds to 924 to 939; it reads RWSGVGIDDWWRNEQF. Residues 940–960 form a helical membrane-spanning segment; that stretch reads WVIGGVSSHLFALFQGLLKVI. The Extracellular segment spans residues 961–988; that stretch reads AGIDTSFTVTSKGGDDEEFSELYTFKWT. Residues 989-1009 traverse the membrane as a helical segment; sequence TLLIPPTTLLLLNFIGVVAGV. Residues 1010–1020 are Cytoplasmic-facing; sequence SNAINNGYESW. The chain crosses the membrane as a helical span at residues 1021–1041; sequence GPLFGKLFFAFWVIVHLYPFL. The Extracellular portion of the chain corresponds to 1042 to 1050; that stretch reads KGLVGRQNR. The helical transmembrane segment at 1051–1071 threads the bilayer; that stretch reads TPTIVIVWSILLASIFSLLWV. At 1072-1093 the chain is on the cytoplasmic side; it reads RIDPFLAKNDGPLLEECGLDCN.

This sequence belongs to the glycosyltransferase 2 family. Plant cellulose synthase subfamily. It depends on Mn(2+) as a cofactor. Requires Zn(2+) as cofactor.

The protein resides in the cell membrane. It catalyses the reaction [(1-&gt;4)-beta-D-glucosyl](n) + UDP-alpha-D-glucose = [(1-&gt;4)-beta-D-glucosyl](n+1) + UDP + H(+). It participates in glycan metabolism; plant cellulose biosynthesis. Functionally, probable catalytic subunit of cellulose synthase terminal complexes ('rosettes'), required for beta-1,4-glucan microfibril crystallization, a major mechanism of the cell wall formation. In Oryza sativa subsp. japonica (Rice), this protein is Probable cellulose synthase A catalytic subunit 3 [UDP-forming] (CESA3).